The primary structure comprises 300 residues: ATP synthase gamma chain (300 aa).

It belongs to the ATPase gamma chain family. F-type ATPases have 2 components, CF(1) - the catalytic core - and CF(0) - the membrane proton channel. CF(1) has five subunits: alpha(3), beta(3), gamma(1), delta(1), epsilon(1). CF(0) has three main subunits: a, b and c.

It localises to the cell membrane. Produces ATP from ADP in the presence of a proton gradient across the membrane. The gamma chain is believed to be important in regulating ATPase activity and the flow of protons through the CF(0) complex. The polypeptide is ATP synthase gamma chain (Enterococcus hirae (strain ATCC 9790 / DSM 20160 / JCM 8729 / LMG 6399 / NBRC 3181 / NCIMB 6459 / NCDO 1258 / NCTC 12367 / WDCM 00089 / R)).